The sequence spans 213 residues: Probable septum site-determining protein MinC (213 aa).

The protein belongs to the MinC family. In terms of assembly, interacts with MinD and FtsZ.

In terms of biological role, cell division inhibitor that blocks the formation of polar Z ring septums. Rapidly oscillates between the poles of the cell to destabilize FtsZ filaments that have formed before they mature into polar Z rings. Prevents FtsZ polymerization. The chain is Probable septum site-determining protein MinC from Pseudothermotoga lettingae (strain ATCC BAA-301 / DSM 14385 / NBRC 107922 / TMO) (Thermotoga lettingae).